Reading from the N-terminus, the 153-residue chain is MKELTKNKKAWHNFTIIENFEAGIVLKGSEVKALRMGRANLKDSFCRIIKGELFLLNAHISFLENTNAFFRPSENGARKLLMHKKEINRLFGAVSKEGMAIVALSLYLNDKNKVKARIALAKGKNLHDKREALKRKEAEREAQSAMKRYAKGY.

Residues 132–142 (ALKRKEAEREA) are compositionally biased toward basic and acidic residues. The disordered stretch occupies residues 132-153 (ALKRKEAEREAQSAMKRYAKGY).

It belongs to the SmpB family.

The protein localises to the cytoplasm. Required for rescue of stalled ribosomes mediated by trans-translation. Binds to transfer-messenger RNA (tmRNA), required for stable association of tmRNA with ribosomes. tmRNA and SmpB together mimic tRNA shape, replacing the anticodon stem-loop with SmpB. tmRNA is encoded by the ssrA gene; the 2 termini fold to resemble tRNA(Ala) and it encodes a 'tag peptide', a short internal open reading frame. During trans-translation Ala-aminoacylated tmRNA acts like a tRNA, entering the A-site of stalled ribosomes, displacing the stalled mRNA. The ribosome then switches to translate the ORF on the tmRNA; the nascent peptide is terminated with the 'tag peptide' encoded by the tmRNA and targeted for degradation. The ribosome is freed to recommence translation, which seems to be the essential function of trans-translation. The polypeptide is SsrA-binding protein (Campylobacter hominis (strain ATCC BAA-381 / DSM 21671 / CCUG 45161 / LMG 19568 / NCTC 13146 / CH001A)).